Here is a 154-residue protein sequence, read N- to C-terminus: MVIPSNTTVYVDADSCPVKEEVISLARTFGKKMVFVYSYAHTMSLPKDVETAIVDTSKEAADLYLLQSVNRGDVCVTQDHALASLLLVKGVIVLSPRGHVYKEEEMPAMLAWRHTSQKARRAGKKTRGPKKFTASDRAAFYHALYAVLEKIAKE.

Belongs to the UPF0178 family.

This Shouchella clausii (strain KSM-K16) (Alkalihalobacillus clausii) protein is UPF0178 protein ABC1688.